The following is a 152-amino-acid chain: Transcriptional regulator MraZ (152 aa).

2 consecutive SpoVT-AbrB domains span residues 5 to 52 and 81 to 124; these read ATLV…PLPE and ASEC…DEQT.

It belongs to the MraZ family. In terms of assembly, forms oligomers.

The protein resides in the cytoplasm. The protein localises to the nucleoid. Negatively regulates its own expression and that of the subsequent genes in the proximal part of the division and cell wall (dcw) gene cluster. Acts by binding directly to DNA. May also regulate the expression of genes outside the dcw cluster. This is Transcriptional regulator MraZ from Pectobacterium atrosepticum (strain SCRI 1043 / ATCC BAA-672) (Erwinia carotovora subsp. atroseptica).